A 274-amino-acid chain; its full sequence is Basic leucine zipper transcriptional factor ATF-like 2 (274 aa).

3 disordered regions span residues 1–47 (MHLC…ALHQ), 128–151 (GSCY…LLQC), and 187–229 (GSSS…PSSA). Residues 17-80 (EQQRQLKKQK…AWWSRTLHVH (64 aa)) form the bZIP domain. The basic motif stretch occupies residues 20–41 (RQLKKQKNRAAAQRSRQKHTDK). Over residues 37–47 (KHTDKADALHQ) the composition is skewed to basic and acidic residues. The interval 45-66 (LHQQHESLEKDNLALRKEIQSL) is leucine-zipper. The segment covering 187-196 (GSSSKLSALQ) has biased composition (low complexity).

Belongs to the bZIP family. Heterodimer; heterodimerizes with JUN family proteins.

The protein resides in the nucleus. AP-1 family transcription factor that controls the differentiation of lineage-specific cells in the immune system. Following infection, participates in the differentiation of CD8(+) thymic conventional dendritic cells in the immune system. Acts via the formation of a heterodimer with JUN family proteins that recognizes and binds DNA sequence 5'-TGA[CG]TCA-3' and regulates expression of target genes. Selectively suppresses CCN1 transcription and hence blocks the downstream cell proliferation signals produced by CCN1 and inhibits CCN1-induced anchorage-independent growth and invasion in several cancer types, such as breast cancer, malignant glioma and metastatic melanoma. Possibly acts by interfering with AP-1 binding to CCN1 promoter. This is Basic leucine zipper transcriptional factor ATF-like 2 (BATF2) from Homo sapiens (Human).